Here is an 816-residue protein sequence, read N- to C-terminus: Mitogen-activated protein kinase 7 (816 aa).

The segment at 1–26 is disordered; the sequence is MAEPLKEEDGEDGSAEPPGPVKAEPA. Position 2 is an N-acetylalanine (Ala2). The required for cytoplasmic targeting stretch occupies residues 2-77; the sequence is AEPLKEEDGE…VVSSARRRLT (76 aa). The region spanning 55 to 347 is the Protein kinase domain; it reads YEIIETIGNG…AAAALRHPFL (293 aa). ATP is bound by residues 61 to 69 and Lys84; that span reads IGNGAYGVV. The tract at residues 78–139 is required for binding to MAP2K5; it reads GQQVAIKKIP…FKSVYVVLDL (62 aa). Positions 140-406 are necessary for oligomerization; the sequence is MESDLHQIIH…QQIRFQPSLQ (267 aa). The active-site Proton acceptor is the Asp182. Residues 219-221 carry the TXY motif; that stretch reads TEY. The disordered stretch occupies residues 406-737; it reads QPVASEPGCP…PVFSGTPKGS (332 aa). Residues 407-806 form a may not be required for kinase activity; required to stimulate MEF2C activity region; that stretch reads PVASEPGCPD…REIQMDSPML (400 aa). 2 stretches are compositionally biased toward pro residues: residues 433-445 and 454-463; these read SPPP…PGPA and QPPPPVSEPA. The segment covering 476-486 has biased composition (low complexity); that stretch reads KAALKAALLKS. Basic and acidic residues-rich tracts occupy residues 502–519, 527–544, and 563–573; these read PEPR…EREE, RAKE…KERG, and DNDRSLLERWT. Residues 505-539 carry the Nuclear localization signal motif; the sequence is RKPVTAQERQREREEKRRRRQERAKEREKRRQERE. The span at 578-587 shows a compositional bias: low complexity; sequence PAAPALTSVP. Pro residues-rich tracts occupy residues 588–610 and 628–655; these read APAP…PGPV and VPQP…PAPP. A compositionally biased stretch (low complexity) spans 676–685; that stretch reads PGSSTPGVLP. The span at 686–695 shows a compositional bias: pro residues; sequence YFPPGLPPPD. The segment covering 701-720 has biased composition (polar residues); sequence QSSMSESPDVNLVTQQLSKS. Ser720 carries the post-translational modification Phosphoserine. Thr733 is subject to Phosphothreonine.

It belongs to the protein kinase superfamily. CMGC Ser/Thr protein kinase family. MAP kinase subfamily. Interacts with MAP2K5. Forms oligomers. Interacts with MEF2A, MEF2C and MEF2D; the interaction phosphorylates the MEF2s and enhances transcriptional activity of MEF2A, MEF2C but not MEF2D. Interacts with SGK1. Preferentially interacts with PML isoform PML-4 but shows interaction also with its other isoforms: isoform PML-1, isoform PML-2, isoform PML-3 and isoform PML-6. Interacts (via N-terminal half) with HSP90AB1-CDC37 chaperone complex in resting cells; the interaction is MAP2K5-independent and prevents MAPK7 from ubiquitination and proteasomal degradation. Interacts with STUB1/CHIP; the interaction is enhanced in the presence of IGF1 or MAP2K5 and promotes STUB1/CHIP E3 ligase activity. Mg(2+) serves as cofactor. Post-translationally, dually phosphorylated on Thr-219 and Tyr-221, which activates the enzyme. Autophosphorylated in vitro on threonine and tyrosine residues when the C-terminal part of the kinase, which could have a regulatory role, is absent. As to expression, expressed in many adult tissues. Abundant in heart, placenta, lung, kidney and skeletal muscle. Not detectable in liver.

The protein resides in the cytoplasm. It localises to the nucleus. The protein localises to the PML body. The enzyme catalyses L-seryl-[protein] + ATP = O-phospho-L-seryl-[protein] + ADP + H(+). The catalysed reaction is L-threonyl-[protein] + ATP = O-phospho-L-threonyl-[protein] + ADP + H(+). With respect to regulation, activated by tyrosine and threonine phosphorylation. Activated in response to hyperosmolarity, hydrogen peroxide, and epidermal growth factor (EGF). In terms of biological role, plays a role in various cellular processes such as proliferation, differentiation and cell survival. The upstream activator of MAPK7 is the MAPK kinase MAP2K5. Upon activation, it translocates to the nucleus and phosphorylates various downstream targets including MEF2C. EGF activates MAPK7 through a Ras-independent and MAP2K5-dependent pathway. As part of the MAPK/ERK signaling pathway, acts as a negative regulator of apoptosis in cardiomyocytes via interaction with STUB1/CHIP and promotion of STUB1-mediated ubiquitination and degradation of ICER-type isoforms of CREM. May have a role in muscle cell differentiation. May be important for endothelial function and maintenance of blood vessel integrity. MAP2K5 and MAPK7 interact specifically with one another and not with MEK1/ERK1 or MEK2/ERK2 pathways. Phosphorylates SGK1 at Ser-78 and this is required for growth factor-induced cell cycle progression. Involved in the regulation of p53/TP53 by disrupting the PML-MDM2 interaction. This chain is Mitogen-activated protein kinase 7 (MAPK7), found in Homo sapiens (Human).